A 342-amino-acid chain; its full sequence is MITPQAALNRLIDGNELFYDEMLALMRQIMRGELSPAQTAAILIGLRVKVESVSEIAAAATVMREFATHVPVSDRRHLVDTCGTGGDKSHTFNISTTSAFVAAAAGARVAKHGGRSVSSSSGSADVLELLGVNLQLTPEQVGQCLDEIGLGFMFAPNHHSAMKHVAPIRKELGARTIFNILGPLTNPAAADHQLMGVFHPDLVGIQSRVLKMLGSRHVMIVHGCDGLDELTLSGPSMVAELKNGEILEYELEPGEFGFPLCELKDLRADTAAQSRDRLLAVLDGQPGPARDIVLLNAGAAIYTADIAPSLADGVTMAREALDSGKAKQKLQQLIALSRKLGG.

Residues Gly83, 86-87 (GD), Thr91, 93-96 (NIST), 111-119 (KHGGRSVSS), and Ser123 each bind 5-phospho-alpha-D-ribose 1-diphosphate. Gly83 is an anthranilate binding site. Ser95 lines the Mg(2+) pocket. Residue Arg169 coordinates anthranilate. Residues Asp228 and Glu229 each contribute to the Mg(2+) site.

It belongs to the anthranilate phosphoribosyltransferase family. Homodimer. The cofactor is Mg(2+).

It carries out the reaction N-(5-phospho-beta-D-ribosyl)anthranilate + diphosphate = 5-phospho-alpha-D-ribose 1-diphosphate + anthranilate. It functions in the pathway amino-acid biosynthesis; L-tryptophan biosynthesis; L-tryptophan from chorismate: step 2/5. Catalyzes the transfer of the phosphoribosyl group of 5-phosphorylribose-1-pyrophosphate (PRPP) to anthranilate to yield N-(5'-phosphoribosyl)-anthranilate (PRA). The chain is Anthranilate phosphoribosyltransferase from Chromobacterium violaceum (strain ATCC 12472 / DSM 30191 / JCM 1249 / CCUG 213 / NBRC 12614 / NCIMB 9131 / NCTC 9757 / MK).